A 310-amino-acid polypeptide reads, in one-letter code: ADP-L-glycero-D-manno-heptose-6-epimerase (310 aa).

NADP(+)-binding positions include 10–11 (FI), 31–32 (DN), lysine 38, lysine 53, 75–79 (EGACS), and asparagine 92. Tyrosine 140 serves as the catalytic Proton acceptor. Lysine 144 provides a ligand contact to NADP(+). Asparagine 169 contacts substrate. Valine 170 and lysine 178 together coordinate NADP(+). Catalysis depends on lysine 178, which acts as the Proton acceptor. Substrate is bound by residues serine 180, histidine 187, 201 to 204 (FEGS), and arginine 209. The residue at position 267 (lysine 267) is an N6-acetyllysine. Tyrosine 272 contributes to the substrate binding site.

Belongs to the NAD(P)-dependent epimerase/dehydratase family. HldD subfamily. Homopentamer. NADP(+) is required as a cofactor.

The enzyme catalyses ADP-D-glycero-beta-D-manno-heptose = ADP-L-glycero-beta-D-manno-heptose. The protein operates within nucleotide-sugar biosynthesis; ADP-L-glycero-beta-D-manno-heptose biosynthesis; ADP-L-glycero-beta-D-manno-heptose from D-glycero-beta-D-manno-heptose 7-phosphate: step 4/4. In terms of biological role, catalyzes the interconversion between ADP-D-glycero-beta-D-manno-heptose and ADP-L-glycero-beta-D-manno-heptose via an epimerization at carbon 6 of the heptose. The sequence is that of ADP-L-glycero-D-manno-heptose-6-epimerase from Shigella boydii serotype 18 (strain CDC 3083-94 / BS512).